A 1785-amino-acid polypeptide reads, in one-letter code: BCL-6 corepressor-like protein 1 (1785 aa).

3 disordered regions span residues 65–101 (VGSG…KMDY), 113–137 (VPLS…NSRA), and 343–368 (ASTP…GPPS). Basic and acidic residues predominate over residues 83-97 (KLGHKSEDKPDDPQP). The residue at position 496 (S496) is a Phosphoserine. 2 stretches are compositionally biased toward polar residues: residues 527-539 (PCTS…TTQP) and 586-600 (GTEQ…TFSP). Disordered stretches follow at residues 527 to 550 (PCTS…PLAD) and 562 to 646 (PTPQ…PMPV). Residues S599 and S613 each carry the phosphoserine modification. K747 participates in a covalent cross-link: Glycyl lysine isopeptide (Lys-Gly) (interchain with G-Cter in SUMO2). Disordered stretches follow at residues 753-781 (IIDQ…QPST), 876-901 (SSSE…EQDP), and 937-977 (VQPS…LKLA). 2 positions are modified to phosphoserine: S1029 and S1033. A Glycyl lysine isopeptide (Lys-Gly) (interchain with G-Cter in SUMO2) cross-link involves residue K1092. Disordered stretches follow at residues 1107–1293 (PDDV…QGRR) and 1312–1487 (WDTN…PEAR). S1162 is modified (phosphoserine). Residues 1176-1185 (VRGKHKHRKP) are compositionally biased toward basic residues. A compositionally biased stretch (basic and acidic residues) spans 1195–1213 (KRADSHEEGSLEKKAKSSF). Positions 1222–1234 (STRTRSQSGSICS) are enriched in polar residues. Residues 1271 to 1284 (TQRDTQYRSHHAQD) show a composition bias toward basic and acidic residues. Over residues 1314–1324 (TNEEEEEEEEE) the composition is skewed to acidic residues. The Nuclear localization signal motif lies at 1328-1336 (KRKKRRRQK). Residues 1328 to 1339 (KRKKRRRQKSRK) show a composition bias toward basic residues. Basic and acidic residues predominate over residues 1352–1363 (EQRRKGRADLKA). A compositionally biased stretch (polar residues) spans 1440-1449 (WSQQKTRSPK). Positions 1461–1480 (TPSKSRSASSEEASESPTAR) are enriched in low complexity. S1476 carries the post-translational modification Phosphoserine. ANK repeat units lie at residues 1529 to 1558 (AGYT…NVNC), 1562 to 1591 (DGTR…DPTL), and 1595 to 1623 (SGQT…QGRA). The segment at 1668–1785 (DDFMFELSDK…SEVEFQSCNS (118 aa)) is PCGF Ub-like fold domain (PUFD); required for the interaction with the KDM2B-SKP1 heterodimeric complex.

Belongs to the BCOR family. Interacts with PCGF1, forming heterodimers. The PCGF1-BCORL1 heterodimeric complex interacts with the KDM2B-SKP1 heterodimeric complex to form a homotetrameric polycomb repression complex 1 (PRC1.1). Interacts with SKP1. Interacts with CTBP1, HDAC4, HDAC5 and HDAC7. As to expression, detected in testis and prostate. Detected at lower levels in peripheral blood leukocytes and spleen. Mainly expressed in the spermatogonia and primary spermatocytes.

It localises to the nucleus. In terms of biological role, transcriptional corepressor. May specifically inhibit gene expression when recruited to promoter regions by sequence-specific DNA-binding proteins such as BCL6. This repression may be mediated at least in part by histone deacetylase activities which can associate with this corepressor. The chain is BCL-6 corepressor-like protein 1 from Homo sapiens (Human).